The following is a 185-amino-acid chain: Elongation factor P (185 aa).

It belongs to the elongation factor P family.

Its subcellular location is the cytoplasm. It functions in the pathway protein biosynthesis; polypeptide chain elongation. Functionally, involved in peptide bond synthesis. Stimulates efficient translation and peptide-bond synthesis on native or reconstituted 70S ribosomes in vitro. Probably functions indirectly by altering the affinity of the ribosome for aminoacyl-tRNA, thus increasing their reactivity as acceptors for peptidyl transferase. This chain is Elongation factor P, found in Picosynechococcus sp. (strain ATCC 27264 / PCC 7002 / PR-6) (Agmenellum quadruplicatum).